A 201-amino-acid polypeptide reads, in one-letter code: Imidazole glycerol phosphate synthase subunit HisH (201 aa).

Positions 2-201 (KVVILDTGCA…ARLLKNFLEM (200 aa)) constitute a Glutamine amidotransferase type-1 domain. Cys77 serves as the catalytic Nucleophile. Active-site residues include His183 and Glu185.

As to quaternary structure, heterodimer of HisH and HisF.

The protein localises to the cytoplasm. It catalyses the reaction 5-[(5-phospho-1-deoxy-D-ribulos-1-ylimino)methylamino]-1-(5-phospho-beta-D-ribosyl)imidazole-4-carboxamide + L-glutamine = D-erythro-1-(imidazol-4-yl)glycerol 3-phosphate + 5-amino-1-(5-phospho-beta-D-ribosyl)imidazole-4-carboxamide + L-glutamate + H(+). The enzyme catalyses L-glutamine + H2O = L-glutamate + NH4(+). The protein operates within amino-acid biosynthesis; L-histidine biosynthesis; L-histidine from 5-phospho-alpha-D-ribose 1-diphosphate: step 5/9. Its function is as follows. IGPS catalyzes the conversion of PRFAR and glutamine to IGP, AICAR and glutamate. The HisH subunit catalyzes the hydrolysis of glutamine to glutamate and ammonia as part of the synthesis of IGP and AICAR. The resulting ammonia molecule is channeled to the active site of HisF. This chain is Imidazole glycerol phosphate synthase subunit HisH, found in Photorhabdus laumondii subsp. laumondii (strain DSM 15139 / CIP 105565 / TT01) (Photorhabdus luminescens subsp. laumondii).